Here is a 131-residue protein sequence, read N- to C-terminus: MREIIQGLLFVALGSVFGGMARFWLSGMVARRIGETFPWGTLTVNVSGAFAIGVFGALAASGHGVFSTPGPWLFAVTGFLGCYTTVSSFALQTLALARDGESLRAISNVTFSLVFCLIAVALGFAAARVLA.

The next 4 membrane-spanning stretches (helical) occupy residues 4 to 24, 46 to 66, 71 to 91, and 105 to 125; these read IIQGLLFVALGSVFGGMARFW, VSGAFAIGVFGALAASGHGVF, PWLFAVTGFLGCYTTVSSFAL, and AISNVTFSLVFCLIAVALGFA. G81 and T84 together coordinate Na(+).

It belongs to the fluoride channel Fluc/FEX (TC 1.A.43) family.

The protein resides in the cell inner membrane. It carries out the reaction fluoride(in) = fluoride(out). Na(+) is not transported, but it plays an essential structural role and its presence is essential for fluoride channel function. In terms of biological role, fluoride-specific ion channel. Important for reducing fluoride concentration in the cell, thus reducing its toxicity. In Rhodopseudomonas palustris (strain BisB18), this protein is Fluoride-specific ion channel FluC 2.